The sequence spans 373 residues: MDGVRAVLLAGGEGRRMGPLGRGRLKPLVPFGGTSRLIDFSIANVHRSGLRDVLLLSQYEERRLMDDLHLVWNGRHRGFRIDFGPYDAVYRRSPGKLPEQLPERIWPLERGTADALLTKAEYVFRQGDAEASEILVLHADHVYRFDYGDMIREHRASKAALTVSYQRIERRYVHLFGMVEFDGDGLLTAFEEKPDDPTSDLVFAAFCLFDAATLRRYLEQLRGTDWQHDISRDVIPAMLAGGELIRGYEVKSYWEDIGTVDRYHRAHRGLLRADPTLALSDMPLTVAPEVPRHLVPGGPGRRASVVAADVANEGEIVSSVVYPGARIGVDAHVVDCVVLPGARVPDGTHLASAIVLEDGSVQQCEAEREEVAL.

Substrate contacts are provided by residues Gly177 and 192 to 193; that span reads EK.

It belongs to the bacterial/plant glucose-1-phosphate adenylyltransferase family. It depends on Mg(2+) as a cofactor.

The enzyme catalyses valienol 1-phosphate + GTP + H(+) = GDP-valienol + diphosphate. In terms of biological role, involved in the biosynthesis of the antifungal agent validamycin A. Catalyzes the conversion of valienol 1-phosphate to GDP-valienol and less effectively to ADP-valienol or other NDP derivatives. The protein is Valienol-1-phosphate guanylyltransferase of Streptomyces hygroscopicus subsp. limoneus.